Reading from the N-terminus, the 281-residue chain is Lipoyl synthase (281 aa).

[4Fe-4S] cluster-binding residues include Cys35, Cys40, Cys46, Cys61, Cys65, Cys68, and Ser274. The 217-residue stretch at 47 to 263 (FGCGQATFLI…RDEALALGFR (217 aa)) folds into the Radical SAM core domain.

This sequence belongs to the radical SAM superfamily. Lipoyl synthase family. The cofactor is [4Fe-4S] cluster.

The protein localises to the cytoplasm. The enzyme catalyses [[Fe-S] cluster scaffold protein carrying a second [4Fe-4S](2+) cluster] + N(6)-octanoyl-L-lysyl-[protein] + 2 oxidized [2Fe-2S]-[ferredoxin] + 2 S-adenosyl-L-methionine + 4 H(+) = [[Fe-S] cluster scaffold protein] + N(6)-[(R)-dihydrolipoyl]-L-lysyl-[protein] + 4 Fe(3+) + 2 hydrogen sulfide + 2 5'-deoxyadenosine + 2 L-methionine + 2 reduced [2Fe-2S]-[ferredoxin]. Its pathway is protein modification; protein lipoylation via endogenous pathway; protein N(6)-(lipoyl)lysine from octanoyl-[acyl-carrier-protein]: step 2/2. Its function is as follows. Catalyzes the radical-mediated insertion of two sulfur atoms into the C-6 and C-8 positions of the octanoyl moiety bound to the lipoyl domains of lipoate-dependent enzymes, thereby converting the octanoylated domains into lipoylated derivatives. The sequence is that of Lipoyl synthase from Trichlorobacter lovleyi (strain ATCC BAA-1151 / DSM 17278 / SZ) (Geobacter lovleyi).